A 502-amino-acid polypeptide reads, in one-letter code: Membrane protein insertase YidC (502 aa).

6 helical membrane-spanning segments follow: residues 12 to 32 (FLIF…FYIY), 286 to 306 (LDWG…YWIY), 312 to 332 (WVLS…PLGY), 382 to 402 (LPIL…IITV), 409 to 429 (FLWI…VIMG), and 452 to 472 (ITSV…VLYW).

It belongs to the OXA1/ALB3/YidC family. Type 1 subfamily. In terms of assembly, interacts with the Sec translocase complex via SecD. Specifically interacts with transmembrane segments of nascent integral membrane proteins during membrane integration.

It is found in the cell membrane. Its function is as follows. Required for the insertion and/or proper folding and/or complex formation of integral membrane proteins into the membrane. Involved in integration of membrane proteins that insert both dependently and independently of the Sec translocase complex, as well as at least some lipoproteins. Aids folding of multispanning membrane proteins. This is Membrane protein insertase YidC from Aquifex aeolicus (strain VF5).